A 237-amino-acid polypeptide reads, in one-letter code: Redox-sensing transcriptional repressor Rex (237 aa).

Residues 45-84 (LYYRELHRLLAAGESSTNSRDLGAMVNVSPAVVRRDLSSI) constitute a DNA-binding region (H-T-H motif). 119–124 (GVGSLG) serves as a coordination point for NAD(+).

It belongs to the transcriptional regulatory Rex family. In terms of assembly, homodimer.

The protein resides in the cytoplasm. In terms of biological role, modulates transcription in response to changes in cellular NADH/NAD(+) redox state. The chain is Redox-sensing transcriptional repressor Rex from Rhodopirellula baltica (strain DSM 10527 / NCIMB 13988 / SH1).